A 1799-amino-acid chain; its full sequence is 1,3-beta-glucan synthase component FKS1 (1799 aa).

Pro residues predominate over residues 1–11 (MSYPNPPPPPK). Residues 1 to 136 (MSYPNPPPPP…SNAGHRPRDP (136 aa)) form a disordered region. The span at 12–23 (GSASFSSSSSDP) shows a compositional bias: low complexity. The span at 51–64 (GAGGAGVAPPGQGG) shows a compositional bias: gly residues. Positions 91–101 (ASESGWSQNEP) are enriched in polar residues. The next 16 helical transmembrane spans lie at 431–451 (IWVL…PSIY), 470–490 (LGGF…FSYI), 504–524 (LIFL…IAFF), 530–550 (VALI…IAFA), 591–611 (FLLW…FLTL), 648–668 (VMFV…YVIW), 1268–1288 (NILV…LGTL), 1323–1343 (CIIS…VQEL), 1422–1442 (LVLL…YFWI), 1446–1466 (GLCV…DFII), 1527–1547 (IGEI…YLFI), 1563–1583 (IAII…TLFL), 1605–1625 (ALAH…LWFL), 1635–1655 (LGII…IAVF), 1704–1724 (DFIA…IPYF), and 1762–1782 (GLLY…PIIF).

This sequence belongs to the glycosyltransferase 48 family. As to quaternary structure, component of the 1,3-beta-glucan synthase (GS) complex composed of a catalytic subunit FKS1 and a regulatory subunit RHO1.

It localises to the cell membrane. The catalysed reaction is [(1-&gt;3)-beta-D-glucosyl](n) + UDP-alpha-D-glucose = [(1-&gt;3)-beta-D-glucosyl](n+1) + UDP + H(+). Activated by magnesium ions. Inhibited by caspofungin and cilofungin. Catalytic subunit of the 1,3-beta-glucan synthase (GS) complex. Synthesizes 1,3-beta-glucan, a major structural component of the yeast cell wall. Involved in cell wall synthesis, maintenance and remodeling. The protein is 1,3-beta-glucan synthase component FKS1 of Cryptococcus neoformans var. grubii serotype A (strain H99 / ATCC 208821 / CBS 10515 / FGSC 9487) (Filobasidiella neoformans var. grubii).